A 96-amino-acid polypeptide reads, in one-letter code: Putative regulatory protein Teth514_1762 (96 aa).

This sequence belongs to the RemA family.

This is Putative regulatory protein Teth514_1762 from Thermoanaerobacter sp. (strain X514).